Here is a 246-residue protein sequence, read N- to C-terminus: Aquaporin AqpM (246 aa).

At 1–11 the chain is on the cytoplasmic side; the sequence is MVSLTKRCIAE. A helical transmembrane segment spans residues 12–32; it reads FIGTFILVFFGAGSAAVTLMI. Residues 33–55 lie on the Extracellular side of the membrane; it reads ASGGTSPNPFNIGIGLLGGLGDW. Residues 56–76 traverse the membrane as a helical segment; sequence VAIGLAFGFAIAASIYALGNI. At 77-103 the chain is on the cytoplasmic side; the sequence is SGCHINPAVTIGLWSVKKFPGREVVPY. The NPA 1 signature appears at 82-84; that stretch reads NPA. Residues 104–124 traverse the membrane as a helical segment; the sequence is IIAQLLGAAFGSFIFLQCAGI. Residues 125 to 145 lie on the Extracellular side of the membrane; that stretch reads GAATVGGLGATAPFPGISYWQ. A helical membrane pass occupies residues 146-166; it reads AMLAEVVGTFLLMITIMGIAV. The Cytoplasmic segment spans residues 167–172; sequence DERAPK. A helical membrane pass occupies residues 173–193; it reads GFAGIIIGLTVAGIITTLGNI. Residues 194 to 217 lie on the Extracellular side of the membrane; the sequence is SGSSLNPARTFGPYLNDMIFAGTN. The NPA 2 motif lies at 199–201; the sequence is NPA. Residues 218 to 238 traverse the membrane as a helical segment; it reads LWNYYPIYVIGPIVGAVLAAL. Residues 239–246 lie on the Cytoplasmic side of the membrane; sequence TYQYLTSE.

The protein belongs to the MIP/aquaporin (TC 1.A.8) family. As to quaternary structure, homotetramer.

The protein localises to the cell membrane. Functionally, channel that permits osmotically driven movement of water in both directions. It mediates rapid entry or exit of water in response to abrupt changes in osmolarity. Also exhibits a transient but reproducible increase in the initial glycerol flux. The protein is Aquaporin AqpM (aqpM) of Methanothermobacter marburgensis (strain ATCC BAA-927 / DSM 2133 / JCM 14651 / NBRC 100331 / OCM 82 / Marburg) (Methanobacterium thermoautotrophicum).